The primary structure comprises 532 residues: Neutral amino acid transporter A (532 aa).

Position 1 is an N-acetylmethionine (Met-1). The tract at residues 1 to 29 (MEKSGETNGYLDGTQAEPAAGPRTPETAM) is disordered. Over 1–41 (MEKSGETNGYLDGTQAEPAAGPRTPETAMGKSQRCASFFRR) the chain is Cytoplasmic. Transmembrane regions (helical) follow at residues 42 to 62 (HALVLLTVSGVLVGAGMGAAL), 88 to 108 (MIILPLVVCSLVSGAASLDAS), and 119 to 139 (AYFGLTTLSASALAVALAFII). Residues 140–216 (KPGAGAQTLQ…VTKEKIPVVT (77 aa)) are Extracellular-facing. Residues Asn-201 and Asn-206 are each glycosylated (N-linked (GlcNAc...) asparagine). A run of 6 helical transmembrane segments spans residues 217–237 (DVEGMNILGLVLFALVLGVAL), 257–277 (ATMVLVSWIMWYVPIGIMFLI), 298–318 (IFASMLGHVIHGGIVLPLVYF), 328–348 (FLLGLLTPFATAFATCSSSAT), 373–393 (IGATVNMDGAAIFQCVAAVFI), and 418–438 (VGAAGVPAGGVLTIAIILEAI). Positions 495–532 (EAIPNSKSEEETSPLVTHQNPAGPVAIAPELESKESVL) are disordered. Residues Ser-507, Ser-527, and Ser-530 each carry the phosphoserine modification.

This sequence belongs to the dicarboxylate/amino acid:cation symporter (DAACS) (TC 2.A.23) family. SLC1A4 subfamily.

The protein resides in the membrane. It localises to the melanosome. The enzyme catalyses L-threonine(in) + Na(+)(in) = L-threonine(out) + Na(+)(out). It catalyses the reaction L-serine(in) + Na(+)(in) = L-serine(out) + Na(+)(out). The catalysed reaction is L-cysteine(in) + Na(+)(in) = L-cysteine(out) + Na(+)(out). It carries out the reaction L-alanine(in) + Na(+)(in) = L-alanine(out) + Na(+)(out). The enzyme catalyses L-proline(in) + Na(+)(in) = L-proline(out) + Na(+)(out). It catalyses the reaction 4-hydroxy-L-proline(in) + Na(+)(in) = 4-hydroxy-L-proline(out) + Na(+)(out). Its function is as follows. Sodium-dependent neutral amino-acid transporter that mediates transport of alanine, serine, cysteine, proline, hydroxyproline and threonine. In Mus musculus (Mouse), this protein is Neutral amino acid transporter A (Slc1a4).